Reading from the N-terminus, the 342-residue chain is 4-hydroxy-3-methylbut-2-enyl diphosphate reductase (342 aa).

Cysteine 47 contributes to the [4Fe-4S] cluster binding site. (2E)-4-hydroxy-3-methylbut-2-enyl diphosphate is bound by residues histidine 78 and histidine 111. Residues histidine 78 and histidine 111 each contribute to the dimethylallyl diphosphate site. Isopentenyl diphosphate-binding residues include histidine 78 and histidine 111. A [4Fe-4S] cluster-binding site is contributed by cysteine 133. Histidine 161 is a (2E)-4-hydroxy-3-methylbut-2-enyl diphosphate binding site. Histidine 161 lines the dimethylallyl diphosphate pocket. Histidine 161 contacts isopentenyl diphosphate. Glutamate 163 serves as the catalytic Proton donor. Position 201 (threonine 201) interacts with (2E)-4-hydroxy-3-methylbut-2-enyl diphosphate. Cysteine 231 is a [4Fe-4S] cluster binding site. Residues serine 259, serine 260, asparagine 261, and serine 303 each coordinate (2E)-4-hydroxy-3-methylbut-2-enyl diphosphate. Positions 259, 260, 261, and 303 each coordinate dimethylallyl diphosphate. Isopentenyl diphosphate-binding residues include serine 259, serine 260, asparagine 261, and serine 303.

The protein belongs to the IspH family. Requires [4Fe-4S] cluster as cofactor.

The enzyme catalyses isopentenyl diphosphate + 2 oxidized [2Fe-2S]-[ferredoxin] + H2O = (2E)-4-hydroxy-3-methylbut-2-enyl diphosphate + 2 reduced [2Fe-2S]-[ferredoxin] + 2 H(+). The catalysed reaction is dimethylallyl diphosphate + 2 oxidized [2Fe-2S]-[ferredoxin] + H2O = (2E)-4-hydroxy-3-methylbut-2-enyl diphosphate + 2 reduced [2Fe-2S]-[ferredoxin] + 2 H(+). It functions in the pathway isoprenoid biosynthesis; dimethylallyl diphosphate biosynthesis; dimethylallyl diphosphate from (2E)-4-hydroxy-3-methylbutenyl diphosphate: step 1/1. The protein operates within isoprenoid biosynthesis; isopentenyl diphosphate biosynthesis via DXP pathway; isopentenyl diphosphate from 1-deoxy-D-xylulose 5-phosphate: step 6/6. Its function is as follows. Catalyzes the conversion of 1-hydroxy-2-methyl-2-(E)-butenyl 4-diphosphate (HMBPP) into a mixture of isopentenyl diphosphate (IPP) and dimethylallyl diphosphate (DMAPP). Acts in the terminal step of the DOXP/MEP pathway for isoprenoid precursor biosynthesis. The protein is 4-hydroxy-3-methylbut-2-enyl diphosphate reductase of Anaplasma marginale (strain Florida).